Reading from the N-terminus, the 1090-residue chain is Telomerase reverse transcriptase (1090 aa).

The interval G184 to S301 is disordered. Residues P190–R204 show a composition bias toward basic residues. 2 stretches are compositionally biased toward basic and acidic residues: residues E218–T232 and H252–V262. The span at K281–E294 shows a compositional bias: pro residues. The TFLY; involved in RNA binding motif lies at T316–Y321. 2 interaction with RNA template regions span residues L371–F376 and W477–Y503. Residues S569–L893 enclose the Reverse transcriptase domain. Mg(2+)-binding residues include D666, D826, and D827.

Belongs to the reverse transcriptase family. Telomerase subfamily. In terms of assembly, catalytic subunit of the telomerase holoenzyme complex composed minimally of TERT and the telomerase RNA template component (TERC). Expressed at highest levels in gonads and brain, and at lower levels in heart, spleen, kidney, gill, muscle and skin. Detected in embryonic stem cell lines before and after differentiation. Isoform F is expressed in gonads, with higher levels in testis relative to ovary, but is not detected in other tissues. Isoform B is expressed predominantly in testis. Isoform C is up-regulated in embryonic stem cell lines after differentiation.

It localises to the nucleus. It is found in the chromosome. The protein resides in the telomere. It carries out the reaction DNA(n) + a 2'-deoxyribonucleoside 5'-triphosphate = DNA(n+1) + diphosphate. Telomerase is a ribonucleoprotein enzyme essential for the replication of chromosome termini in most eukaryotes. It elongates telomeres. It is a reverse transcriptase that adds simple sequence repeats to chromosome ends by copying a template sequence within the RNA component of the enzyme. This Oryzias latipes (Japanese rice fish) protein is Telomerase reverse transcriptase.